We begin with the raw amino-acid sequence, 193 residues long: Fe/S biogenesis protein NfuA (193 aa).

Residues Cys-151 and Cys-154 each contribute to the [4Fe-4S] cluster site.

Belongs to the NfuA family. As to quaternary structure, homodimer. The cofactor is [4Fe-4S] cluster.

In terms of biological role, involved in iron-sulfur cluster biogenesis. Binds a 4Fe-4S cluster, can transfer this cluster to apoproteins, and thereby intervenes in the maturation of Fe/S proteins. Could also act as a scaffold/chaperone for damaged Fe/S proteins. This Buchnera aphidicola subsp. Cinara cedri (strain Cc) protein is Fe/S biogenesis protein NfuA.